Here is a 389-residue protein sequence, read N- to C-terminus: Coproporphyrin III ferrochelatase (389 aa).

Fe-coproporphyrin III-binding residues include serine 70 and tyrosine 139. Histidine 205 is a Fe(2+) binding site. A disordered region spans residues 207–229 (IPSTDAGKSGPSGRPDSGEPWGE). Glutamate 303 is a binding site for Fe(2+).

This sequence belongs to the ferrochelatase family.

The protein resides in the cytoplasm. The enzyme catalyses Fe-coproporphyrin III + 2 H(+) = coproporphyrin III + Fe(2+). The protein operates within porphyrin-containing compound metabolism; protoheme biosynthesis. Its function is as follows. Involved in coproporphyrin-dependent heme b biosynthesis. Catalyzes the insertion of ferrous iron into coproporphyrin III to form Fe-coproporphyrin III. In Leifsonia xyli subsp. xyli (strain CTCB07), this protein is Coproporphyrin III ferrochelatase.